The following is a 454-amino-acid chain: Notoamide biosynthesis cluster protein M' (454 aa).

Asn51 and Asn74 each carry an N-linked (GlcNAc...) asparagine glycan. A compositionally biased stretch (basic residues) spans 205–219; it reads KARSKEKKPKRKKSK. The interval 205 to 224 is disordered; the sequence is KARSKEKKPKRKKSKAEKEH. 2 consecutive transmembrane segments (helical) span residues 334-354 and 375-395; these read MTTV…SGLF and FWMY…VWGV.

The protein localises to the membrane. In terms of biological role, part of the gene cluster that mediates the biosynthesis of notoamide, a fungal indole alkaloid that belongs to a family of natural products containing a characteristic bicyclo[2.2.2]diazaoctane core. The first step of notoamide biosynthesis involves coupling of L-proline and L-tryptophan by the bimodular NRPS notE', to produce cyclo-L-tryptophan-L-proline called brevianamide F. The reverse prenyltransferase notF' then acts as a deoxybrevianamide E synthase and converts brevianamide F to deoxybrevianamide E via reverse prenylation at C-2 of the indole ring leading to the bicyclo[2.2.2]diazaoctane core. Deoxybrevianamide E is further hydroxylated at C-6 of the indole ring, likely catalyzed by the cytochrome P450 monooxygenase notG', to yield 6-hydroxy-deoxybrevianamide E. 6-hydroxy-deoxybrevianamide E is a specific substrate of the prenyltransferase notC' for normal prenylation at C-7 to produce 6-hydroxy-7-prenyl-deoxybrevianamide, also called notoamide S. As the proposed pivotal branching point in notoamide biosynthesis, notoamide S can be diverted to notoamide E through an oxidative pyran ring closure putatively catalyzed by either notH' cytochrome P450 monooxygenase or the notD' FAD-linked oxidoreductase. This step would be followed by an indole 2,3-epoxidation-initiated pinacol-like rearrangement catalyzed by the notB' FAD-dependent monooxygenase leading to the formation of notoamide C and notoamide D. On the other hand notoamide S is converted to notoamide T by notH' (or notD'), a bifunctional oxidase that also functions as the intramolecular Diels-Alderase responsible for generation of (-)-notoamide T. To generate antipodal (+)-notoaminide T, notH (or notD) in Aspergillus strain MF297-2 is expected to catalyze a Diels-Alder reaction leading to the opposite stereochemistry. The remaining oxidoreductase notD' (or notH') likely catalyzes the oxidative pyran ring formation to yield (-)-stephacidin A. The FAD-dependent monooxygenase notI' is highly similar to notB' and is predicted to catalyze a similar conversion from (-)-stephacidin A to (+)-notoamide B via the 2,3-epoxidation of (-)-stephacidin A followed by a pinacol-type rearrangement. Finally, it remains unclear which enzyme could be responsible for the final hydroxylation steps leading to notoamide A and sclerotiamide. The function of notM' in the notoamide biosynthesis has not been determined yet. The chain is Notoamide biosynthesis cluster protein M' from Aspergillus versicolor.